The chain runs to 537 residues: Probable E3 ubiquitin-protein ligase ARI3 (537 aa).

A disordered region spans residues 1 to 30 (MDDDYMMLDDDYGEEEDENYSEDDNYSEAE). The tract at residues 117-331 (KTMKCDVCME…IAGHSCGRYK (215 aa)) is TRIAD supradomain. 18 residues coordinate Zn(2+): cysteine 121, cysteine 124, cysteine 139, histidine 141, cysteine 144, cysteine 147, cysteine 166, cysteine 171, cysteine 210, cysteine 216, cysteine 234, cysteine 236, cysteine 241, cysteine 244, histidine 249, cysteine 254, cysteine 281, and cysteine 284. The segment at 121-171 (CDVCMEDDLPSNVMTRMECGHRFCNDCWIGHFTVKINEGESKRILCMAHEC) adopts an RING-type 1 zinc-finger fold. Residues 190–254 (DRYDRFLIES…LSESHSPCSC (65 aa)) form an IBR-type zinc finger. The segment at 281–309 (CPKCSKPIQKRDGCNLMTCKCGQHFCWLC) adopts an RING-type 2; atypical zinc-finger fold. Residue cysteine 294 is part of the active site. Cysteine 299, cysteine 301, cysteine 306, cysteine 309, histidine 317, and cysteine 327 together coordinate Zn(2+).

It belongs to the RBR family. Ariadne subfamily. Zn(2+) serves as cofactor. In terms of tissue distribution, ubiquitous.

It carries out the reaction [E2 ubiquitin-conjugating enzyme]-S-ubiquitinyl-L-cysteine + [acceptor protein]-L-lysine = [E2 ubiquitin-conjugating enzyme]-L-cysteine + [acceptor protein]-N(6)-ubiquitinyl-L-lysine.. The protein operates within protein modification; protein ubiquitination. In terms of biological role, might act as an E3 ubiquitin-protein ligase, or as part of E3 complex, which accepts ubiquitin from specific E2 ubiquitin-conjugating enzymes and then transfers it to substrates. This is Probable E3 ubiquitin-protein ligase ARI3 (ARI3) from Arabidopsis thaliana (Mouse-ear cress).